Here is a 300-residue protein sequence, read N- to C-terminus: tRNA pseudouridine synthase B (300 aa).

Residue aspartate 38 is the Nucleophile of the active site.

The protein belongs to the pseudouridine synthase TruB family. Type 1 subfamily.

The catalysed reaction is uridine(55) in tRNA = pseudouridine(55) in tRNA. Responsible for synthesis of pseudouridine from uracil-55 in the psi GC loop of transfer RNAs. The sequence is that of tRNA pseudouridine synthase B from Anaplasma phagocytophilum (strain HZ).